The chain runs to 66 residues: Phylloseptin-H7 (66 aa).

An N-terminal signal peptide occupies residues 1–22 (MAFLKKSLFLVLFLGLVSLSIC). The propeptide occupies 23 to 44 (EEEKRETEEEENDQEEDDKSEE). The segment at 25–44 (EKRETEEEENDQEEDDKSEE) is disordered. Over residues 30-41 (EEEENDQEEDDK) the composition is skewed to acidic residues. Position 65 is a leucine amide (Leu-65).

As to expression, expressed by the skin glands.

Its subcellular location is the secreted. Its function is as follows. Has antimicrobial activity. This is Phylloseptin-H7 from Pithecopus hypochondrialis (Orange-legged leaf frog).